The primary structure comprises 186 residues: Negative modulator of initiation of replication (186 aa).

This sequence belongs to the SeqA family. In terms of assembly, homodimer. Polymerizes to form helical filaments.

It localises to the cytoplasm. In terms of biological role, negative regulator of replication initiation, which contributes to regulation of DNA replication and ensures that replication initiation occurs exactly once per chromosome per cell cycle. Binds to pairs of hemimethylated GATC sequences in the oriC region, thus preventing assembly of replication proteins and re-initiation at newly replicated origins. Repression is relieved when the region becomes fully methylated. The protein is Negative modulator of initiation of replication of Glaesserella parasuis serovar 5 (strain SH0165) (Haemophilus parasuis).